The sequence spans 323 residues: Phospho-N-acetylmuramoyl-pentapeptide-transferase (323 aa).

Helical transmembrane passes span 5–25 (SAVL…PSLI), 57–77 (LLFI…QGLI), 81–101 (LWAL…DDSI), 118–138 (LCQV…GFQM), 140–160 (FGTT…IVGF), 173–193 (LVSG…LVNL), 196–216 (PGYP…LGFF), 225–247 (IFMG…LLLH), and 302–322 (IVFW…ILLV).

The protein belongs to the glycosyltransferase 4 family. MraY subfamily. Mg(2+) is required as a cofactor.

Its subcellular location is the cell membrane. The catalysed reaction is UDP-N-acetyl-alpha-D-muramoyl-L-alanyl-gamma-D-glutamyl-L-lysyl-D-alanyl-D-alanine + di-trans,octa-cis-undecaprenyl phosphate = Mur2Ac(oyl-L-Ala-gamma-D-Glu-L-Lys-D-Ala-D-Ala)-di-trans,octa-cis-undecaprenyl diphosphate + UMP. The protein operates within cell wall biogenesis; peptidoglycan biosynthesis. Its function is as follows. Catalyzes the initial step of the lipid cycle reactions in the biosynthesis of the cell wall peptidoglycan: transfers peptidoglycan precursor phospho-MurNAc-pentapeptide from UDP-MurNAc-pentapeptide onto the lipid carrier undecaprenyl phosphate, yielding undecaprenyl-pyrophosphoryl-MurNAc-pentapeptide, known as lipid I. The chain is Phospho-N-acetylmuramoyl-pentapeptide-transferase from Limosilactobacillus reuteri (strain DSM 20016) (Lactobacillus reuteri).